Here is a 59-residue protein sequence, read N- to C-terminus: Large ribosomal subunit protein bL32 (59 aa).

Residues 1-21 (MAVPKKKSSKSKGRSRAAHHA) are disordered.

The protein belongs to the bacterial ribosomal protein bL32 family.

This chain is Large ribosomal subunit protein bL32, found in Magnetococcus marinus (strain ATCC BAA-1437 / JCM 17883 / MC-1).